Here is a 312-residue protein sequence, read N- to C-terminus: Ornithine carbamoyltransferase (312 aa).

Residues Ser-57–Thr-60, Gln-84, Arg-108, and His-135–Gln-138 contribute to the carbamoyl phosphate site. Residues Asn-166, Asp-226, and Ser-230 to Met-231 contribute to the L-ornithine site. Residues Cys-265 to Leu-266 and Arg-293 contribute to the carbamoyl phosphate site.

This sequence belongs to the aspartate/ornithine carbamoyltransferase superfamily. OTCase family.

Its subcellular location is the cytoplasm. The catalysed reaction is carbamoyl phosphate + L-ornithine = L-citrulline + phosphate + H(+). It participates in amino-acid degradation; L-arginine degradation via ADI pathway; carbamoyl phosphate from L-arginine: step 2/2. In terms of biological role, reversibly catalyzes the transfer of the carbamoyl group from carbamoyl phosphate (CP) to the N(epsilon) atom of ornithine (ORN) to produce L-citrulline. This chain is Ornithine carbamoyltransferase, found in Brucella abortus (strain 2308).